The sequence spans 577 residues: Proline--tRNA ligase (577 aa).

Belongs to the class-II aminoacyl-tRNA synthetase family. ProS type 1 subfamily. In terms of assembly, homodimer.

It localises to the cytoplasm. The catalysed reaction is tRNA(Pro) + L-proline + ATP = L-prolyl-tRNA(Pro) + AMP + diphosphate. Functionally, catalyzes the attachment of proline to tRNA(Pro) in a two-step reaction: proline is first activated by ATP to form Pro-AMP and then transferred to the acceptor end of tRNA(Pro). As ProRS can inadvertently accommodate and process non-cognate amino acids such as alanine and cysteine, to avoid such errors it has two additional distinct editing activities against alanine. One activity is designated as 'pretransfer' editing and involves the tRNA(Pro)-independent hydrolysis of activated Ala-AMP. The other activity is designated 'posttransfer' editing and involves deacylation of mischarged Ala-tRNA(Pro). The misacylated Cys-tRNA(Pro) is not edited by ProRS. This Chlamydia felis (strain Fe/C-56) (Chlamydophila felis) protein is Proline--tRNA ligase.